The following is a 1193-amino-acid chain: Major DNA-binding protein (1193 aa).

A Required for filament formation motif is present at residues 827–828 (FW). The segment at 1125–1145 (AGGGPAGSAGGPESGGGAGAA) is disordered. Positions 1170–1193 (PTAAALDGGGDGDECAFPAKRLRL) are required for nuclear localization.

This sequence belongs to the herpesviridae major DNA-binding protein family. Homooligomers. Forms double-helical filaments necessary for the formation of replication compartments within the host nucleus. Interacts with the origin-binding protein. Interacts with the helicase primase complex; this interaction stimulates primer synthesis activity of the helicase-primase complex. Interacts with the DNA polymerase. Interacts with the alkaline exonuclease; this interaction increases its nuclease processivity.

It is found in the host nucleus. In terms of biological role, plays several crucial roles in viral infection. Participates in the opening of the viral DNA origin to initiate replication by interacting with the origin-binding protein. May disrupt loops, hairpins and other secondary structures present on ssDNA to reduce and eliminate pausing of viral DNA polymerase at specific sites during elongation. Promotes viral DNA recombination by performing strand-transfer, characterized by the ability to transfer a DNA strand from a linear duplex to a complementary single-stranded DNA circle. Can also catalyze the renaturation of complementary single strands. Additionally, reorganizes the host cell nucleus, leading to the formation of prereplicative sites and replication compartments. This process is driven by the protein which can form double-helical filaments in the absence of DNA. The protein is Major DNA-binding protein of Tupaiid herpesvirus (strain 2) (TuHV-2).